Here is a 520-residue protein sequence, read N- to C-terminus: Basal body-orientation factor 1 (520 aa).

A compositionally biased stretch (basic residues) spans 1-21; the sequence is MPKKKGKGKGKGKGKGKGKKD. The segment at 1–34 is disordered; sequence MPKKKGKGKGKGKGKGKGKKDGKHDSKADRESEI. Basic and acidic residues predominate over residues 22 to 34; that stretch reads GKHDSKADRESEI. Coiled coils occupy residues 27-175 and 245-386; these read KADR…REKM and VKEA…RQEA. The segment at 468–492 is disordered; sequence AHPPALSASSSEKIQVSSDAGSTVE. Positions 469 to 478 are enriched in low complexity; the sequence is HPPALSASSS. A compositionally biased stretch (polar residues) spans 479-492; the sequence is EKIQVSSDAGSTVE.

It belongs to the BBOF1 family.

It is found in the cytoplasm. It localises to the cytoskeleton. Its subcellular location is the cilium basal body. Functionally, basal body protein required in multiciliate cells to align and maintain cilia orientation in response to flow. May act by mediating a maturation step that stabilizes and aligns cilia orientation. Not required to respond to planar cell polarity (PCP) or flow-based orientation cues. This Danio rerio (Zebrafish) protein is Basal body-orientation factor 1.